Here is a 244-residue protein sequence, read N- to C-terminus: Lectin (244 aa).

A disordered region spans residues 1–20 (TETETTSFSIPKTDQPSSPK).

Belongs to the leguminous lectin family. In terms of assembly, homodimer. In contrast to other Lathyrus lectins which are tetramer of two alpha and two beta chains.

In Lathyrus sphaericus (Spring vetchling), this protein is Lectin.